Consider the following 125-residue polypeptide: Holo-[acyl-carrier-protein] synthase (125 aa).

Mg(2+)-binding residues include Asp8 and Glu57.

Belongs to the P-Pant transferase superfamily. AcpS family. The cofactor is Mg(2+).

Its subcellular location is the cytoplasm. The enzyme catalyses apo-[ACP] + CoA = holo-[ACP] + adenosine 3',5'-bisphosphate + H(+). In terms of biological role, transfers the 4'-phosphopantetheine moiety from coenzyme A to a Ser of acyl-carrier-protein. This Aromatoleum aromaticum (strain DSM 19018 / LMG 30748 / EbN1) (Azoarcus sp. (strain EbN1)) protein is Holo-[acyl-carrier-protein] synthase.